Here is a 215-residue protein sequence, read N- to C-terminus: 3,4-dihydroxy-2-butanone 4-phosphate synthase (215 aa).

D-ribulose 5-phosphate contacts are provided by residues R38 to E39, D43, R151 to T155, and E175. E39 lines the Mg(2+) pocket. A Mg(2+)-binding site is contributed by H154.

Belongs to the DHBP synthase family. Homodimer. The cofactor is Mg(2+). Requires Mn(2+) as cofactor.

The enzyme catalyses D-ribulose 5-phosphate = (2S)-2-hydroxy-3-oxobutyl phosphate + formate + H(+). Its pathway is cofactor biosynthesis; riboflavin biosynthesis; 2-hydroxy-3-oxobutyl phosphate from D-ribulose 5-phosphate: step 1/1. Functionally, catalyzes the conversion of D-ribulose 5-phosphate to formate and 3,4-dihydroxy-2-butanone 4-phosphate. This Haemophilus influenzae (strain PittEE) protein is 3,4-dihydroxy-2-butanone 4-phosphate synthase.